Reading from the N-terminus, the 239-residue chain is 2,3,4,5-tetrahydropyridine-2,6-dicarboxylate N-acetyltransferase (239 aa).

It belongs to the transferase hexapeptide repeat family. DapH subfamily.

The enzyme catalyses (S)-2,3,4,5-tetrahydrodipicolinate + acetyl-CoA + H2O = L-2-acetamido-6-oxoheptanedioate + CoA. It functions in the pathway amino-acid biosynthesis; L-lysine biosynthesis via DAP pathway; LL-2,6-diaminopimelate from (S)-tetrahydrodipicolinate (acetylase route): step 1/3. Functionally, catalyzes the transfer of an acetyl group from acetyl-CoA to tetrahydrodipicolinate. The chain is 2,3,4,5-tetrahydropyridine-2,6-dicarboxylate N-acetyltransferase from Staphylococcus haemolyticus (strain JCSC1435).